Here is a 197-residue protein sequence, read N- to C-terminus: Nucleoside triphosphate pyrophosphatase (197 aa).

The active-site Proton acceptor is aspartate 72.

Belongs to the Maf family. Requires a divalent metal cation as cofactor.

The protein resides in the cytoplasm. The enzyme catalyses a ribonucleoside 5'-triphosphate + H2O = a ribonucleoside 5'-phosphate + diphosphate + H(+). It carries out the reaction a 2'-deoxyribonucleoside 5'-triphosphate + H2O = a 2'-deoxyribonucleoside 5'-phosphate + diphosphate + H(+). Nucleoside triphosphate pyrophosphatase. May have a dual role in cell division arrest and in preventing the incorporation of modified nucleotides into cellular nucleic acids. This Corynebacterium glutamicum (strain ATCC 13032 / DSM 20300 / JCM 1318 / BCRC 11384 / CCUG 27702 / LMG 3730 / NBRC 12168 / NCIMB 10025 / NRRL B-2784 / 534) protein is Nucleoside triphosphate pyrophosphatase.